Consider the following 416-residue polypeptide: E3 ubiquitin-protein ligase makorin-2 (416 aa).

2 consecutive C3H1-type zinc fingers follow at residues 2-29 (STKQ…HDLA) and 31-58 (SKPS…HTKP). The tract at residues 61 to 144 (AAGGAVGPAP…DPQTSPEMKP (84 aa)) is disordered. Over residues 95-123 (HSNEPGKREKKTLVLRDRNLTGLAEDKTP) the composition is skewed to basic and acidic residues. Phosphoserine is present on Ser139. A C3H1-type 3 zinc finger spans residues 165 to 192 (SNEPQLCPYAAAGECRFGDACVYLHGDM). The tract at residues 193–222 (CEICRLQVLHPFDPEQRKAHEKMCMSTFEH) is makorin-type Cys-His. Residues 238-292 (CSICMEVILEKASASERRFGILSNCSHTYCLSCIRQWRCAKQFENPIIKSCPECR) form an RING-type zinc finger. The C3H1-type 4 zinc finger occupies 321–350 (GMGKKACKYFEQGKGTCPFGSKCLYRHAYP).

As to quaternary structure, interacts with PDLIM2 (via LIM zinc-binding domain). Interacts with RELA. As to expression, highly expressed in the testis, and lower expression in the brain, thymus, heart, lung, liver, spleen, kidney, ovary, uterus, and seminal vesicle (at protein level). Expressed in primary immune cells, such as CD4-positive and CD8-positive T cells, CD19-positive B cells and CD11c-positive dendritic cells, and in embryonic fibroblasts (at protein level).

It is found in the cytoplasm. It localises to the nucleus. The enzyme catalyses S-ubiquitinyl-[E2 ubiquitin-conjugating enzyme]-L-cysteine + [acceptor protein]-L-lysine = [E2 ubiquitin-conjugating enzyme]-L-cysteine + N(6)-ubiquitinyl-[acceptor protein]-L-lysine.. It participates in protein modification; protein ubiquitination. E3 ubiquitin ligase catalyzing the covalent attachment of ubiquitin moieties onto substrate proteins. Promotes the polyubiquitination and proteasome-dependent degradation of RELA/p65, thereby suppressing RELA-mediated NF-kappa-B transactivation and negatively regulating inflammatory responses. Plays a role in the regulation of spermiation and in male fertility. The polypeptide is E3 ubiquitin-protein ligase makorin-2 (Mkrn2) (Mus musculus (Mouse)).